Here is a 549-residue protein sequence, read N- to C-terminus: Tegument protein (549 aa).

3 disordered regions span residues 50–92, 353–391, and 523–542; these read KKKA…TASP, ETGDCSSLPNANTQTHRFPSPHKEMRPPPTNEADSCSSY, and TPIKTTSSSSPRPRNDTRSP. Composition is skewed to polar residues over residues 75 to 84 and 356 to 369; these read PQALSVPSLS and DCSSLPNANTQTHR. The segment covering 523 to 534 has biased composition (low complexity); that stretch reads TPIKTTSSSSPR.

This viral structural protein may have important functions, such as protein kinase activity, DNA binding, and possible transcriptional activation of immediate-early genes. This chain is Tegument protein, found in Homo sapiens (Human).